A 414-amino-acid polypeptide reads, in one-letter code: 3-phosphoshikimate 1-carboxyvinyltransferase (414 aa).

The 3-phosphoshikimate site is built by Lys20, Ser21, and Arg25. Lys20 lines the phosphoenolpyruvate pocket. The phosphoenolpyruvate site is built by Gly85 and Arg113. 3-phosphoshikimate-binding residues include Ser154, Ser155, Gln156, Ser181, Asp296, and Lys323. Gln156 contributes to the phosphoenolpyruvate binding site. Asp296 functions as the Proton acceptor in the catalytic mechanism. The phosphoenolpyruvate site is built by Arg327, Arg371, and Lys395.

The protein belongs to the EPSP synthase family. In terms of assembly, monomer.

It is found in the cytoplasm. It carries out the reaction 3-phosphoshikimate + phosphoenolpyruvate = 5-O-(1-carboxyvinyl)-3-phosphoshikimate + phosphate. The protein operates within metabolic intermediate biosynthesis; chorismate biosynthesis. In terms of biological role, catalyzes the transfer of the enolpyruvyl moiety of phosphoenolpyruvate (PEP) to the 5-hydroxyl of shikimate-3-phosphate (S3P) to produce enolpyruvyl shikimate-3-phosphate and inorganic phosphate. This chain is 3-phosphoshikimate 1-carboxyvinyltransferase, found in Saccharolobus islandicus (strain Y.G.57.14 / Yellowstone #1) (Sulfolobus islandicus).